Reading from the N-terminus, the 20-residue chain is Hemocyanin subunit 6 (20 aa).

The protein belongs to the tyrosinase family. Hemocyanin subfamily. As to expression, hemolymph.

It is found in the secreted. Its subcellular location is the extracellular space. Functionally, hemocyanins are copper-containing oxygen carriers occurring freely dissolved in the hemolymph of many mollusks and arthropods. This chain is Hemocyanin subunit 6, found in Homarus americanus (American lobster).